Here is a 496-residue protein sequence, read N- to C-terminus: Glycylpeptide N-tetradecanoyltransferase 1 (496 aa).

A disordered region spans residues 1 to 82; the sequence is MADESETAVK…STQDQPVKMT (82 aa). Phosphoserine is present on residues serine 31 and serine 47. Residues 55–66 are compositionally biased toward basic residues; it reads KKKKKKQKKKKE. Phosphoserine is present on serine 83. The tetradecanoyl-CoA site is built by glutamine 118, phenylalanine 119, tryptophan 120, phenylalanine 247, leucine 248, cysteine 249, valine 250, serine 256, arginine 258, valine 259, and alanine 260.

The protein belongs to the NMT family. Ubiquitous.

The protein localises to the cytoplasm. It is found in the cytosol. Its subcellular location is the membrane. It carries out the reaction N-terminal glycyl-[protein] + tetradecanoyl-CoA = N-tetradecanoylglycyl-[protein] + CoA + H(+). The catalysed reaction is N-terminal glycyl-L-lysyl-[protein] + tetradecanoyl-CoA = N-terminal glycyl-(N(6)-tetradecanoyl)-L-lysyl-[protein] + CoA + H(+). Functionally, adds a myristoyl group to the N-terminal glycine residue of certain cellular and viral proteins. Also able to mediate N-terminal lysine myristoylation of proteins: catalyzes myristoylation of ARF6 on both 'Gly-2' and 'Lys-3'. Lysine myristoylation is required to maintain ARF6 on membranes during the GTPase cycle. Required for normal embryogenesis. This is Glycylpeptide N-tetradecanoyltransferase 1 from Mus musculus (Mouse).